Reading from the N-terminus, the 270-residue chain is tRNA pseudouridine synthase A (270 aa).

The Nucleophile role is filled by aspartate 60. The interval phenylalanine 107–phenylalanine 111 is RNA binding. Tyrosine 118 contacts substrate. Residues glutamine 168–arginine 172 are interaction with tRNA.

The protein belongs to the tRNA pseudouridine synthase TruA family. As to quaternary structure, homodimer.

The enzyme catalyses uridine(38/39/40) in tRNA = pseudouridine(38/39/40) in tRNA. Functionally, formation of pseudouridine at positions 38, 39 and 40 in the anticodon stem and loop of transfer RNAs. This is tRNA pseudouridine synthase A from Klebsiella pneumoniae (strain 342).